The sequence spans 79 residues: Large ribosomal subunit protein bL31 (79 aa).

The protein belongs to the bacterial ribosomal protein bL31 family. Type A subfamily. Part of the 50S ribosomal subunit.

In terms of biological role, binds the 23S rRNA. The sequence is that of Large ribosomal subunit protein bL31 from Trichormus variabilis (strain ATCC 29413 / PCC 7937) (Anabaena variabilis).